We begin with the raw amino-acid sequence, 348 residues long: Phosphoribosylformylglycinamidine cyclo-ligase (348 aa).

It belongs to the AIR synthase family.

The protein localises to the cytoplasm. It carries out the reaction 2-formamido-N(1)-(5-O-phospho-beta-D-ribosyl)acetamidine + ATP = 5-amino-1-(5-phospho-beta-D-ribosyl)imidazole + ADP + phosphate + H(+). It participates in purine metabolism; IMP biosynthesis via de novo pathway; 5-amino-1-(5-phospho-D-ribosyl)imidazole from N(2)-formyl-N(1)-(5-phospho-D-ribosyl)glycinamide: step 2/2. This chain is Phosphoribosylformylglycinamidine cyclo-ligase, found in Roseobacter denitrificans (strain ATCC 33942 / OCh 114) (Erythrobacter sp. (strain OCh 114)).